Here is a 72-residue protein sequence, read N- to C-terminus: UPF0270 protein YheU (72 aa).

This sequence belongs to the UPF0270 family.

This is UPF0270 protein YheU from Escherichia coli (strain ATCC 8739 / DSM 1576 / NBRC 3972 / NCIMB 8545 / WDCM 00012 / Crooks).